We begin with the raw amino-acid sequence, 218 residues long: DNA endonuclease I-ChuI (218 aa).

It belongs to the LAGLIDADG endonuclease family.

The protein localises to the plastid. Its subcellular location is the chloroplast. Its function is as follows. Probable endonuclease involved in intron homing. Encoded in the group-I intron of the subunit rRNA-encoding gene (rrnL), it generates a staggered cut with 4-nt (CTCG) 3'-OH overhangs 2 bp downstream from the intron insertion site. The sequence is that of DNA endonuclease I-ChuI from Chlamydomonas applanata (Chlamydomonas humicola).